A 132-amino-acid polypeptide reads, in one-letter code: Small ribosomal subunit protein uS8 (132 aa).

This sequence belongs to the universal ribosomal protein uS8 family. Part of the 30S ribosomal subunit. Contacts proteins S5 and S12.

Functionally, one of the primary rRNA binding proteins, it binds directly to 16S rRNA central domain where it helps coordinate assembly of the platform of the 30S subunit. The chain is Small ribosomal subunit protein uS8 from Micrococcus luteus (strain ATCC 4698 / DSM 20030 / JCM 1464 / CCM 169 / CCUG 5858 / IAM 1056 / NBRC 3333 / NCIMB 9278 / NCTC 2665 / VKM Ac-2230) (Micrococcus lysodeikticus).